A 613-amino-acid chain; its full sequence is Protein CER1-like 2 (613 aa).

6 helical membrane passes run 13–33 (WTPL…DSIY), 44–64 (LLIV…ISLS), 95–115 (IIFN…TSTI), 122–142 (GVIL…YWFH), 182–202 (LILG…VVSI), and 322–342 (YLFL…SFSF). A Fatty acid hydroxylase domain is found at 134–268 (VEFIYYWFHR…MPMYDYIYGT (135 aa)).

Belongs to the sterol desaturase family. As to expression, not detected in any tissues.

Its subcellular location is the membrane. This chain is Protein CER1-like 2, found in Arabidopsis thaliana (Mouse-ear cress).